A 722-amino-acid polypeptide reads, in one-letter code: MMKEVLSTGQGNTEVIHTGTLQRYQSYHIGDFCFQEIEKEIHDIEFQCQEDERNGHEAPMTKIKKLTGSTDQHDHRHAGNKPIKDQLGSSFYSHLPELHIIQIKGKIGNQFEKSTSDAPSVSTSQRISPRPQIHISNNYGNNSPNSSLLPQKQEVYMREKSFQCNESGKAFNCSSLLRKHQIPHLGDKQYKCDVCGKLFNHKQYLTCHCRCHTGEKPYKCNECGKSFSQVSSLTCHRRLHTAVKSHKCNECGKIFGQNSALVIHKAIHTGEKPYKCNECDKAFNQQSNLARHRRIHTGEKPYKCEECDKVFSRKSTLESHKRIHTGEKPYKCKVCDTAFTWNSQLARHKRIHTGEKTYKCNECGKTFSHKSSLVCHHRLHGGEKSYKCKVCDKAFAWNSHLVRHTRIHSGGKPYKCNECGKTFGQNSDLLIHKSIHTGEQPYKYEECEKVFSCGSTLETHKIIHTGEKPYKCKVCDKAFACHSYLAKHTRIHSGEKPYKCNECSKTFRLRSYLASHRRVHSGEKPYKCNECSKTFSQRSYLHCHRRLHSGEKPYKCNECGKTFSHKPSLVHHRRLHTGEKSYKCTVCDKAFVRNSYLARHTRIHTAEKPYKCNECGKAFNQQSQLSLHHRIHAGEKLYKCETCDKVFSRKSHLKRHRRIHPGKKPYKCKVCDKTFGSDSHLKQHTGLHTGEKPYKCNECGKAFSKQSTLIHHQAVHGVGKLD.

A C2H2-type 1; degenerate zinc finger spans residues Phe162 to His184. 9 C2H2-type zinc fingers span residues Tyr190–His212, Tyr218–His240, His246–His268, Tyr274–His296, Tyr302–His324, Tyr330–His352, Tyr358–His380, Tyr386–His408, and Tyr414–His436. The segment at Tyr442–His464 adopts a C2H2-type 11; degenerate zinc-finger fold. 9 consecutive C2H2-type zinc fingers follow at residues Tyr470–His492, Tyr498–His520, Tyr526–His548, Tyr554–His576, Tyr582–His604, Tyr610–His632, Tyr638–His660, Tyr666–His688, and Tyr694–His716.

Belongs to the krueppel C2H2-type zinc-finger protein family.

Its subcellular location is the nucleus. May be involved in transcriptional regulation. The chain is Zinc finger protein 600 (ZNF600) from Homo sapiens (Human).